The sequence spans 331 residues: Anthranilate phosphoribosyltransferase (331 aa).

5-phospho-alpha-D-ribose 1-diphosphate-binding positions include glycine 79, 82–83 (GD), threonine 87, 89–92 (NIST), 107–115 (KHGNYGATS), and alanine 119. Glycine 79 contributes to the anthranilate binding site. Residue serine 91 coordinates Mg(2+). Position 110 (asparagine 110) interacts with anthranilate. An anthranilate-binding site is contributed by arginine 165. Mg(2+)-binding residues include aspartate 223 and glutamate 224.

This sequence belongs to the anthranilate phosphoribosyltransferase family. Homodimer. Mg(2+) is required as a cofactor.

It catalyses the reaction N-(5-phospho-beta-D-ribosyl)anthranilate + diphosphate = 5-phospho-alpha-D-ribose 1-diphosphate + anthranilate. Its pathway is amino-acid biosynthesis; L-tryptophan biosynthesis; L-tryptophan from chorismate: step 2/5. Functionally, catalyzes the transfer of the phosphoribosyl group of 5-phosphorylribose-1-pyrophosphate (PRPP) to anthranilate to yield N-(5'-phosphoribosyl)-anthranilate (PRA). The sequence is that of Anthranilate phosphoribosyltransferase from Bacteroides fragilis (strain ATCC 25285 / DSM 2151 / CCUG 4856 / JCM 11019 / LMG 10263 / NCTC 9343 / Onslow / VPI 2553 / EN-2).